The chain runs to 270 residues: Fructose-2,6-bisphosphatase TIGAR (270 aa).

Histidine 11 (tele-phosphohistidine intermediate) is an active-site residue. N6-acetyllysine is present on lysine 50. Glutamate 89 (proton donor/acceptor) is an active-site residue.

This sequence belongs to the phosphoglycerate mutase family. Interacts with HK2; the interaction increases hexokinase HK2 activity in a hypoxia- and HIF1A-dependent manner, resulting in the regulation of mitochondrial membrane potential, thus increasing NADPH production and decreasing intracellular ROS levels.

The protein localises to the cytoplasm. It localises to the nucleus. The protein resides in the mitochondrion. The enzyme catalyses beta-D-fructose 2,6-bisphosphate + H2O = beta-D-fructose 6-phosphate + phosphate. Functionally, fructose-bisphosphatase hydrolyzing fructose-2,6-bisphosphate as well as fructose-1,6-bisphosphate. Acts as a negative regulator of glycolysis by lowering intracellular levels of fructose-2,6-bisphosphate in a p53/TP53-dependent manner, resulting in the pentose phosphate pathway (PPP) activation and NADPH production. Contributes to the generation of reduced glutathione to cause a decrease in intracellular reactive oxygen species (ROS) content, correlating with its ability to protect cells from oxidative or metabolic stress-induced cell death. Plays a role in promoting protection against cell death during hypoxia by decreasing mitochondria ROS levels in a HK2-dependent manner through a mechanism that is independent of its fructose-bisphosphatase activity. In response to cardiac damage stress, mediates p53-induced inhibition of myocyte mitophagy through ROS levels reduction and the subsequent inactivation of BNIP3. Reduced mitophagy results in an enhanced apoptotic myocyte cell death, and exacerbates cardiac damage. Plays a role in adult intestinal regeneration; contributes to the growth, proliferation and survival of intestinal crypts following tissue ablation. Plays a neuroprotective role against ischemic brain damage by enhancing PPP flux and preserving mitochondria functions. Protects glioma cells from hypoxia- and ROS-induced cell death by inhibiting glycolysis and activating mitochondrial energy metabolism and oxygen consumption in a TKTL1-dependent and p53/TP53-independent manner. Plays a role in cancer cell survival by promoting DNA repair through activating PPP flux in a CDK5-ATM-dependent signaling pathway during hypoxia and/or genome stress-induced DNA damage responses. Involved in intestinal tumor progression. This Bos taurus (Bovine) protein is Fructose-2,6-bisphosphatase TIGAR.